The sequence spans 408 residues: SERPINE1 mRNA-binding protein 1 (408 aa).

Ser-25 is subject to Phosphoserine. Disordered stretches follow at residues 33–292 (AAEN…TLDE) and 328–408 (SKSE…PALA). Low complexity predominate over residues 51 to 68 (AKSAAQAAAQTNSNAAGK). Residue Lys-52 is modified to N6-acetyllysine; alternate. A Glycyl lysine isopeptide (Lys-Gly) (interchain with G-Cter in SUMO1); alternate cross-link involves residue Lys-52. An N6-acetyllysine modification is found at Lys-68. Composition is skewed to basic and acidic residues over residues 70 to 80 (LRKESQKDRKN), 89 to 114 (VDKK…RRPD), and 122 to 162 (KIID…DRPI). A Glycyl lysine isopeptide (Lys-Gly) (interchain with G-Cter in SUMO1); alternate cross-link involves residue Lys-102. Lys-102 is covalently cross-linked (Glycyl lysine isopeptide (Lys-Gly) (interchain with G-Cter in SUMO2); alternate). N6-acetyllysine occurs at positions 122 and 140. Over residues 164-182 (GRGGLGRGRGGRGRGMGRG) the composition is skewed to gly residues. Residues Arg-165 and Arg-188 each carry the omega-N-methylarginine modification. Positions 183 to 199 (DGFDSRGKREFDRHSGS) are enriched in basic and acidic residues. Ser-197 bears the Phosphoserine mark. Ser-199 bears the Phosphoserine; by MTOR mark. Ser-203, Ser-205, and Ser-208 each carry phosphoserine. Lys-211 carries the post-translational modification N6-acetyllysine; alternate. Lys-211 is covalently cross-linked (Glycyl lysine isopeptide (Lys-Gly) (interchain with G-Cter in SUMO2); alternate). Arg-216 bears the Omega-N-methylarginine mark. At Ser-221 the chain carries Phosphoserine. Residue His-222 forms a Glycyl lysine isopeptide (Lys-Gly) (interchain with G-Cter in SUMO2) linkage. Thr-226 carries the phosphothreonine; by MTOR modification. Lys-228 is covalently cross-linked (Glycyl lysine isopeptide (Lys-Gly) (interchain with G-Cter in SUMO1); alternate). Lys-228 is covalently cross-linked (Glycyl lysine isopeptide (Lys-Gly) (interchain with G-Cter in SUMO2); alternate). Residue Lys-228 forms a Glycyl lysine isopeptide (Lys-Gly) (interchain with G-Cter in SUMO2) linkage. Phosphoserine occurs at positions 231, 234, and 237. Ser-234 carries the phosphothreonine modification. The residue at position 240 (Lys-240) is a Phosphothreonine. Polar residues predominate over residues 240–253 (KQISYNYSDLDQSN). A compositionally biased stretch (basic and acidic residues) spans 261-275 (GEEHHPVADTENKEN). Lys-281 is covalently cross-linked (Glycyl lysine isopeptide (Lys-Gly) (interchain with G-Cter in SUMO1); alternate). Residue Lys-281 forms a Glycyl lysine isopeptide (Lys-Gly) (interchain with G-Cter in SUMO2); alternate linkage. 2 stretches are compositionally biased toward basic and acidic residues: residues 282 to 292 (EEGPKEMTLDE) and 328 to 342 (SKSE…VMDH). Residue Lys-329 is modified to N6-acetyllysine. Ser-330 is subject to Phosphoserine. Over residues 363 to 372 (GRPGRGGRGG) the composition is skewed to gly residues. Arg-364, Arg-367, and Arg-370 each carry omega-N-methylarginine. Phosphoserine is present on residues Ser-392 and Ser-394.

The protein belongs to the SERBP1-HABP4 family. As to quaternary structure, associates with mature 80S ribosomes. Interacts with EEF2/eEF2; interaction sequesters EEF2/eEF2 at the A-site of the ribosome, thereby blocking the interaction sites of the mRNA-tRNA complex, promoting ribosome stabilization and hibernation. Interacts with SPIN1. Interacts with CHD3 and TDRD3. Interacts with ZDHHC17 (via ANK repeats). Post-translationally, phosphorylation by MTOR inhibits SERBP1 and relieves ribosome hibernation. Expressed at high level in the heart, skeletal muscle and kidney, and at low levels in placenta, liver and brain.

It localises to the cytoplasm. The protein localises to the nucleus. The protein resides in the perinuclear region. In terms of biological role, ribosome-binding protein that promotes ribosome hibernation, a process during which ribosomes are stabilized in an inactive state and preserved from proteasomal degradation. Acts via its association with EEF2/eEF2 factor, sequestering EEF2/eEF2 at the A-site of the ribosome and promoting ribosome stabilization and storage in an inactive state. May also play a role in the regulation of mRNA stability: binds to the 3'-most 134 nt of the SERPINE1/PAI1 mRNA, a region which confers cyclic nucleotide regulation of message decay. Seems to play a role in PML-nuclear bodies formation. This Homo sapiens (Human) protein is SERPINE1 mRNA-binding protein 1.